The following is a 362-amino-acid chain: Protein MGF 360-19R (362 aa).

One copy of the ANK repeat lies at 66–98 (LLNTALMKAVQDNNYELIKLFTEWGANINYGLI).

Belongs to the asfivirus MGF 360 family.

Its function is as follows. Plays a role in virus cell tropism, and may be required for efficient virus replication in macrophages. This is Protein MGF 360-19R from Ornithodoros (relapsing fever ticks).